The chain runs to 349 residues: MSQLILGIESSCDETGVALVRAGEGGAVPVLLAHALHSQIDMHQAYGGVVPELASRDHIRRVLPLTREVLRESGERLEDVDVVAYTRGPGLAGALLVGAGVACALGAALDKPVLGVHHLEGHLLSPFLSSDPPEFPFVALLVSGGHTQLMRVEGVGRYEILGETIDDAAGEAFDKSAKLMGLGYPGGPALSRLAEQGSATAFKLPRPLLHSGDLDFSFAGLKTAVLTQAKKLGDELTARKADLAASTEAAIVEVLVKKTLAALQKTGLQRVVVAGGVGANRHLRAQLNAACARAKVRVHYPELHLCTDNGAMIAMAAAMRLQAGQQQPNRDYAFDVKPRWPLDAITLAA.

Fe cation contacts are provided by histidine 118 and histidine 122. Residues 141–145 (LVSGG), aspartate 174, glycine 187, and asparagine 280 contribute to the substrate site. Aspartate 308 is a binding site for Fe cation.

It belongs to the KAE1 / TsaD family. Fe(2+) serves as cofactor.

Its subcellular location is the cytoplasm. It carries out the reaction L-threonylcarbamoyladenylate + adenosine(37) in tRNA = N(6)-L-threonylcarbamoyladenosine(37) in tRNA + AMP + H(+). Required for the formation of a threonylcarbamoyl group on adenosine at position 37 (t(6)A37) in tRNAs that read codons beginning with adenine. Is involved in the transfer of the threonylcarbamoyl moiety of threonylcarbamoyl-AMP (TC-AMP) to the N6 group of A37, together with TsaE and TsaB. TsaD likely plays a direct catalytic role in this reaction. The polypeptide is tRNA N6-adenosine threonylcarbamoyltransferase (Acidovorax sp. (strain JS42)).